The following is a 707-amino-acid chain: Zinc finger CCHC domain-containing protein 8 (707 aa).

N-acetylalanine is present on A2. Residues 16-44 (FDHPEESIPKPVHTRFKDDDGDEEDENGV) are disordered. The segment covering 34 to 43 (DDGDEEDENG) has biased composition (acidic residues). Residues 45–80 (GDAELRERLRQCEETIEQLRAENQELKRKLNILTRP) are a coiled coil. A CCHC-type zinc finger spans residues 227-244 (PHCFNCGSEEHQMKDCPM). 2 RBM7 binding regions span residues 286-299 (FKPG…QDAL) and 309-324 (FIYR…GWLK). A Phosphothreonine modification is found at T342. 3 disordered regions span residues 409–518 (APGV…LTLE), 531–607 (LEQA…TSLC), and 641–660 (QKLF…HSPI). K413 participates in a covalent cross-link: Glycyl lysine isopeptide (Lys-Gly) (interchain with G-Cter in SUMO2). Positions 456–465 (SQSSESFQFQ) are enriched in low complexity. Pro residues predominate over residues 466-496 (PPLPPDTPPLPRGTPPPVFTPPLPKGTPPLT). T472, T479, and T485 each carry phosphothreonine. Residue T492 is modified to Phosphothreonine; by GSK3. Residues 516–539 (TLEELEEQQRRIWAALEQAESVNS) adopt a coiled-coil conformation. A compositionally biased stretch (polar residues) spans 549–559 (LTGNSVASSPC). T577 is subject to Phosphothreonine. S598 bears the Phosphoserine mark. Residues 598-607 (SPDSEVTSLC) are compositionally biased toward polar residues. T648 is subject to Phosphothreonine. S649, S658, and S695 each carry phosphoserine. Residues 659-707 (PIPDMSKFATGITPFEFENMAESTGMYLRIRSLLKNSPRNQQKNKKASE) form an MTREX binding region.

Belongs to the ZCCHC8 family. As to quaternary structure, component of a nuclear TRAMP-like complex, an ATP-dependent exosome regulatory complex consisting of a helicase (MTREX), an oligadenylate polymerase (TENT4B or TENT4A), and a substrate specific RNA-binding factor (ZCCHC7 or ZCCHC8). Several TRAMP-like complexes exist with specific compositions and are associated with nuclear, or nucleolar RNA exosomes. Identified in the spliceosome C complex. Component of the nuclear exosome targeting (NEXT) complex composed of MTREX, ZCCHC8, and RBM7 that directs a subset of non-coding short-lived RNAs for exosomal degradation. Interacts with proteins involved in RNA processing and degradation such as MTREX and RBM7; interaction with MTREX enhances MTREX RNA helicase activity and bridges between RBM7 and MTREX. Interacts with TERC, the telomerase RNA component. Phosphorylation at Thr-492 by GSK3 is triggered in cells entering mitosis; this phosphorylation is greatly enhanced by nocodazole treatment, but reduced by lithium.

Its subcellular location is the nucleus. It localises to the nucleoplasm. Functionally, scaffolding subunit of the trimeric nuclear exosome targeting (NEXT) complex that is involved in the surveillance and turnover of aberrant transcripts and non-coding RNAs. NEXT functions as an RNA exosome cofactor that directs a subset of non-coding short-lived RNAs for exosomal degradation. May be involved in pre-mRNA splicing. It is required for 3'-end maturation of telomerase RNA component (TERC), TERC 3'-end targeting to the nuclear RNA exosome, and for telomerase function. This Homo sapiens (Human) protein is Zinc finger CCHC domain-containing protein 8 (ZCCHC8).